The following is a 644-amino-acid chain: Probable potassium transport system protein Kup (644 aa).

Helical transmembrane passes span 10–30 (GGAT…GDIG), 56–76 (ILSL…AWVI), 106–126 (WWIL…GVIT), 143–163 (PAWK…LFMV), 175–195 (FGPS…TWIV), 212–232 (FFGI…LAVT), 252–272 (AWYF…GALL), 282–302 (PFFM…SGIA), 343–363 (IYLP…ILWF), 371–391 (FAYG…VFFV), 403–423 (AGLF…ANLL), and 425–445 (FVEG…TMST).

This sequence belongs to the HAK/KUP transporter (TC 2.A.72) family.

The protein resides in the cell inner membrane. The enzyme catalyses K(+)(in) + H(+)(in) = K(+)(out) + H(+)(out). Its function is as follows. Transport of potassium into the cell. Likely operates as a K(+):H(+) symporter. The sequence is that of Probable potassium transport system protein Kup from Acidithiobacillus ferrooxidans (strain ATCC 23270 / DSM 14882 / CIP 104768 / NCIMB 8455) (Ferrobacillus ferrooxidans (strain ATCC 23270)).